A 94-amino-acid chain; its full sequence is Mitochondrial import receptor subunit TOM9-1 (94 aa).

The Cytoplasmic portion of the chain corresponds to 1–48; sequence MAPKKIGAGKGDSSILAKISNYDIVSQGRRAACDAVYVSKKLLKSTGK. A helical transmembrane segment spans residues 49–66; the sequence is AAWIAGTTFLILAVPLIL. Residues 67 to 94 lie on the Mitochondrial intermembrane side of the membrane; that stretch reads ELEQDHRLGEIDFEQASLLGTPPVGAML.

It belongs to the Tom22 family. Forms part of the preprotein translocase complex of the outer mitochondrial membrane (TOM complex) which consists of at least 6 different proteins (TOM5, TOM6, TOM7, TOM20, TOM22/TOM9 and TOM40). In terms of tissue distribution, expressed in roots, flowers, young cotyledons and leaves.

It localises to the mitochondrion outer membrane. Its function is as follows. Central component of the receptor complex responsible for the recognition and translocation of cytosolically synthesized mitochondrial preproteins. Together with TOM20 functions as the transit peptide receptor at the surface of the mitochondrion outer membrane and facilitates the movement of preproteins into the translocation pore. This is Mitochondrial import receptor subunit TOM9-1 (TOM9-1) from Arabidopsis thaliana (Mouse-ear cress).